Consider the following 269-residue polypeptide: Regulating synaptic membrane exocytosis protein 4 (269 aa).

A C2 domain is found at 115–233 (PMGDVEIGLQ…DLTTLAVGWY (119 aa)). Phosphoserine occurs at positions 254 and 257.

Binds PPFIA3. Does not bind RAB3.

The protein localises to the synapse. Functionally, regulates synaptic membrane exocytosis. The polypeptide is Regulating synaptic membrane exocytosis protein 4 (RIMS4) (Homo sapiens (Human)).